The chain runs to 29 residues: uncharacterized protein (29 aa).

The protein localises to the plastid. Its subcellular location is the chloroplast. This is an uncharacterized protein from Trieres chinensis (Marine centric diatom).